A 208-amino-acid polypeptide reads, in one-letter code: LexA repressor (208 aa).

The H-T-H motif DNA-binding region spans 29 to 49 (VREICSAVGLSSTSTVHGHIS). Catalysis depends on for autocatalytic cleavage activity residues Ser-129 and Lys-167.

The protein belongs to the peptidase S24 family. In terms of assembly, homodimer.

It carries out the reaction Hydrolysis of Ala-|-Gly bond in repressor LexA.. In terms of biological role, represses a number of genes involved in the response to DNA damage (SOS response), including recA and lexA. In the presence of single-stranded DNA, RecA interacts with LexA causing an autocatalytic cleavage which disrupts the DNA-binding part of LexA, leading to derepression of the SOS regulon and eventually DNA repair. The polypeptide is LexA repressor (Limosilactobacillus reuteri (strain DSM 20016) (Lactobacillus reuteri)).